The chain runs to 307 residues: Sesquiterpene synthase-like protein Agr10 (307 aa).

Residues G287–R307 form a disordered region. Residues E296–R307 show a composition bias toward polar residues.

This sequence belongs to the terpene synthase family.

The polypeptide is Sesquiterpene synthase-like protein Agr10 (Cyclocybe aegerita (Black poplar mushroom)).